The chain runs to 107 residues: Large ribosomal subunit protein uL24 (107 aa).

The protein belongs to the universal ribosomal protein uL24 family. As to quaternary structure, part of the 50S ribosomal subunit.

Its function is as follows. One of two assembly initiator proteins, it binds directly to the 5'-end of the 23S rRNA, where it nucleates assembly of the 50S subunit. In terms of biological role, one of the proteins that surrounds the polypeptide exit tunnel on the outside of the subunit. This Coxiella burnetii (strain Dugway 5J108-111) protein is Large ribosomal subunit protein uL24.